Here is a 616-residue protein sequence, read N- to C-terminus: Alpha terpineol synthase, chloroplastic (616 aa).

The transit peptide at 1–41 (MALLSVAPLQKPLTSCSPFSTTMPTLGVCTPRKVVTPSIIM) directs the protein to the chloroplast. Mg(2+)-binding residues include Asp367, Asp371, and Asp519. A DDXXD motif motif is present at residues 367–371 (DDIYD).

The protein belongs to the terpene synthase family. Tpsd subfamily. It depends on Mg(2+) as a cofactor. Mn(2+) serves as cofactor.

The protein resides in the plastid. It localises to the chloroplast. The catalysed reaction is (2E)-geranyl diphosphate + H2O = (S)-alpha-terpineol + diphosphate. It carries out the reaction (2E)-geranyl diphosphate + H2O = 1,8-cineole + diphosphate. It catalyses the reaction (2E)-geranyl diphosphate = beta-myrcene + diphosphate. The enzyme catalyses (2E)-geranyl diphosphate = (1S,5S)-sabinene + diphosphate. Its pathway is terpene metabolism; oleoresin biosynthesis. It functions in the pathway secondary metabolite biosynthesis; terpenoid biosynthesis. Functionally, monoterpene synthase (TPS) involved in the biosynthesis of monoterpene natural products included in conifer oleoresin secretions and volatile emissions; these compounds contribute to biotic and abiotic stress defense against herbivores and pathogens. Catalyzes the conversion of (2E)-geranyl diphosphate (GPP) to alpha-terpineol and, to a lower extent, to 1,8-cineole, myrcene and (-)-sabinene. In Pinus contorta (Shore pine), this protein is Alpha terpineol synthase, chloroplastic.